Consider the following 659-residue polypeptide: Serine/threonine-protein kinase StkP (659 aa).

The Cytoplasmic segment spans residues 1–342 (MIQIGKIFAG…PQAPKKHRFK (342 aa)). One can recognise a Protein kinase domain in the interval 12–273 (YRIVKQIGRG…EMYVDLSSSL (262 aa)). Residues 18 to 26 (IGRGGMADV) and Lys42 each bind ATP. Asp136 (proton acceptor) is an active-site residue. Residues 343–363 (MRYLILLASLVLVAASLIWIL) form a helical membrane-spanning segment. At 364 to 659 (SRSPATIAIP…YKPKTTSATP (296 aa)) the chain is on the periplasmic side. 4 consecutive PASTA domains span residues 366 to 433 (SPAT…VVSS), 434 to 505 (GKQS…TVAK), 506 to 577 (KATT…TVAK), and 578 to 651 (KVTS…SIYK). Residues 541-561 (EEESSESEPGTIMKQSPGAGT) form a disordered region.

Belongs to the protein kinase superfamily. Ser/Thr protein kinase family. In terms of assembly, homodimer. StkP forms dimers through its transmembrane and extracellular domains. Dimer formation likely promotes autophosphorylation activity and might be necessary for targeting StkP substrate. Interacts with PhpP via its kinase domain. Post-translationally, autophosphorylation occurs predominantly on threonine residue(s) and weakly on serine residue(s). Dephosphorylated by PhpP.

Its subcellular location is the cell membrane. The catalysed reaction is L-seryl-[protein] + ATP = O-phospho-L-seryl-[protein] + ADP + H(+). It carries out the reaction L-threonyl-[protein] + ATP = O-phospho-L-threonyl-[protein] + ADP + H(+). Its activity is regulated as follows. StkP is activated continuously during growth and its activity is inhibited upon growth arrest. Inhibited by staurosporine, a known protein kinase inhibitor. Protein kinase involved in signal transduction pathways that regulate various cellular processes. Likely senses intracellular peptidoglycan subunits present in the cell division septa of actively growing cells; thus, intracellular unlinked peptidoglycan may serve as the signal molecules that trigger StkP phosphorylation activity on a set of substrates. Plays a crucial role in the regulation of cell shape and cell division of S.pneumoniae through control of at least DivIVA activity. Is involved in competence triggering, via the transduction of signals culminating directly or indirectly in ComD activation. Is important for the resistance of S.pneumoniae to various environmental stress conditions. Appears to be a global regulator that positively controls the transcription of a set of genes encoding functions involved in cell wall metabolism, pyrimidine biosynthesis, DNA repair, iron uptake, and oxidative stress response, and that seems to down-regulate genes employed in competence. Since StkP is unlikely to directly regulate transcription, the input signal must be transmitted through an effector molecule. Identified target substrates that are specifically phosphorylated by StkP in vivo, mainly on threonine residues, are DivIVA, GlmM, PpaC, MapZ, KhpB (also called EloR/Jag) and StkP itself. Autophosphorylated StkP is a substrate for the cotranscribed protein phosphatase PhpP; PhpP and StkP appear to constitute a functional signaling couple in vivo. The chain is Serine/threonine-protein kinase StkP (stkP) from Streptococcus pneumoniae.